The sequence spans 188 residues: Methylated-DNA--protein-cysteine methyltransferase (188 aa).

3 residues coordinate DNA: Tyr-120, Gly-121, and Arg-134. Cys-151 acts as the Nucleophile; methyl group acceptor in catalysis. Ser-157 serves as a coordination point for DNA.

The protein belongs to the MGMT family.

The protein localises to the nucleus. The enzyme catalyses a 6-O-methyl-2'-deoxyguanosine in DNA + L-cysteinyl-[protein] = S-methyl-L-cysteinyl-[protein] + a 2'-deoxyguanosine in DNA. The catalysed reaction is a 4-O-methyl-thymidine in DNA + L-cysteinyl-[protein] = a thymidine in DNA + S-methyl-L-cysteinyl-[protein]. In terms of biological role, involved in the cellular defense against the biological effects of O6-methylguanine (O6-MeG) and O4-methylthymine (O4-MeT) in DNA. Repairs the methylated nucleobase in DNA by stoichiometrically transferring the methyl group to a cysteine residue in the enzyme. This is a suicide reaction: the enzyme is irreversibly inactivated. Prefers double-stranded DNA over single-stranded DNA as substrate. This is Methylated-DNA--protein-cysteine methyltransferase (MGT1) from Saccharomyces cerevisiae (strain YJM789) (Baker's yeast).